The following is a 196-amino-acid chain: GTP cyclohydrolase 1 (196 aa).

Zn(2+)-binding residues include cysteine 86, histidine 89, and cysteine 158.

The protein belongs to the GTP cyclohydrolase I family. Toroid-shaped homodecamer, composed of two pentamers of five dimers.

It catalyses the reaction GTP + H2O = 7,8-dihydroneopterin 3'-triphosphate + formate + H(+). It functions in the pathway cofactor biosynthesis; 7,8-dihydroneopterin triphosphate biosynthesis; 7,8-dihydroneopterin triphosphate from GTP: step 1/1. In Clostridium botulinum (strain ATCC 19397 / Type A), this protein is GTP cyclohydrolase 1.